Reading from the N-terminus, the 524-residue chain is Ribosomal protein uS12 methylthiotransferase RimO (524 aa).

A compositionally biased stretch (polar residues) spans 20 to 31 (NSQTASDSTQPA). The tract at residues 20 to 59 (NSQTASDSTQPAASAYHHKANHNQNRSIEQSAQQAAEQSL) is disordered. A compositionally biased stretch (low complexity) spans 48-58 (EQSAQQAAEQS). The MTTase N-terminal domain occupies 67-177 (PKVGFVSLGC…VITAVSTHAP (111 aa)). [4Fe-4S] cluster contacts are provided by cysteine 76, cysteine 112, cysteine 141, cysteine 216, cysteine 220, and cysteine 223. Positions 202 to 443 (LTPSHYAYLK…MAVQQQISEQ (242 aa)) constitute a Radical SAM core domain. Residues 446–519 (QEKVGKTMTV…EYDLFASYDA (74 aa)) enclose the TRAM domain.

This sequence belongs to the methylthiotransferase family. RimO subfamily. The cofactor is [4Fe-4S] cluster.

Its subcellular location is the cytoplasm. It carries out the reaction L-aspartate(89)-[ribosomal protein uS12]-hydrogen + (sulfur carrier)-SH + AH2 + 2 S-adenosyl-L-methionine = 3-methylsulfanyl-L-aspartate(89)-[ribosomal protein uS12]-hydrogen + (sulfur carrier)-H + 5'-deoxyadenosine + L-methionine + A + S-adenosyl-L-homocysteine + 2 H(+). In terms of biological role, catalyzes the methylthiolation of an aspartic acid residue of ribosomal protein uS12. This chain is Ribosomal protein uS12 methylthiotransferase RimO, found in Psychrobacter sp. (strain PRwf-1).